We begin with the raw amino-acid sequence, 141 residues long: HTH-type transcriptional repressor NsrR (141 aa).

Residues 2 to 129 form the HTH rrf2-type domain; that stretch reads QLTNFTDYGL…DNYTLADLVE (128 aa). The H-T-H motif DNA-binding region spans 28-51; that stretch reads ISEVTDVYGVSRNHMVKIINQLSR. Positions 91, 96, and 102 each coordinate [2Fe-2S] cluster.

Requires [2Fe-2S] cluster as cofactor.

Nitric oxide-sensitive repressor of genes involved in protecting the cell against nitrosative stress. May require iron for activity. The protein is HTH-type transcriptional repressor NsrR of Shigella boydii serotype 18 (strain CDC 3083-94 / BS512).